Here is an 81-residue protein sequence, read N- to C-terminus: Photosystem I iron-sulfur center (81 aa).

4Fe-4S ferredoxin-type domains are found at residues Ser2 to Trp31 and Ile39 to Tyr68. [4Fe-4S] cluster-binding residues include Cys11, Cys14, Cys17, Cys21, Cys48, Cys51, Cys54, and Cys58.

As to quaternary structure, the eukaryotic PSI reaction center is composed of at least 11 subunits. Requires [4Fe-4S] cluster as cofactor.

It localises to the plastid. The protein resides in the chloroplast thylakoid membrane. It catalyses the reaction reduced [plastocyanin] + hnu + oxidized [2Fe-2S]-[ferredoxin] = oxidized [plastocyanin] + reduced [2Fe-2S]-[ferredoxin]. In terms of biological role, apoprotein for the two 4Fe-4S centers FA and FB of photosystem I (PSI); essential for photochemical activity. FB is the terminal electron acceptor of PSI, donating electrons to ferredoxin. The C-terminus interacts with PsaA/B/D and helps assemble the protein into the PSI complex. Required for binding of PsaD and PsaE to PSI. PSI is a plastocyanin-ferredoxin oxidoreductase, converting photonic excitation into a charge separation, which transfers an electron from the donor P700 chlorophyll pair to the spectroscopically characterized acceptors A0, A1, FX, FA and FB in turn. The polypeptide is Photosystem I iron-sulfur center (Liriodendron tulipifera (Tuliptree)).